Reading from the N-terminus, the 249-residue chain is Ubiquinone/menaquinone biosynthesis C-methyltransferase UbiE (249 aa).

Residues Thr72, Asp93, and 121-122 contribute to the S-adenosyl-L-methionine site; that span reads DA.

The protein belongs to the class I-like SAM-binding methyltransferase superfamily. MenG/UbiE family.

It carries out the reaction a 2-demethylmenaquinol + S-adenosyl-L-methionine = a menaquinol + S-adenosyl-L-homocysteine + H(+). The enzyme catalyses a 2-methoxy-6-(all-trans-polyprenyl)benzene-1,4-diol + S-adenosyl-L-methionine = a 5-methoxy-2-methyl-3-(all-trans-polyprenyl)benzene-1,4-diol + S-adenosyl-L-homocysteine + H(+). Its pathway is quinol/quinone metabolism; menaquinone biosynthesis; menaquinol from 1,4-dihydroxy-2-naphthoate: step 2/2. It participates in cofactor biosynthesis; ubiquinone biosynthesis. Functionally, methyltransferase required for the conversion of demethylmenaquinol (DMKH2) to menaquinol (MKH2) and the conversion of 2-polyprenyl-6-methoxy-1,4-benzoquinol (DDMQH2) to 2-polyprenyl-3-methyl-6-methoxy-1,4-benzoquinol (DMQH2). This is Ubiquinone/menaquinone biosynthesis C-methyltransferase UbiE from Teredinibacter turnerae (strain ATCC 39867 / T7901).